Reading from the N-terminus, the 590-residue chain is Protein Spindly (590 aa).

The stretch at Met1–Glu401 forms a coiled coil. Residues Asn446 to Gln590 form a disordered region. Basic and acidic residues-rich tracts occupy residues Ser483–Glu497 and Arg518–Glu527. Polar residues-rich tracts occupy residues Val541–Gln554 and Gln572–Gln590.

Belongs to the Spindly family.

It localises to the chromosome. The protein localises to the centromere. Its subcellular location is the kinetochore. Functionally, required for the localization of dynein and dynactin to the mitotic kintochore. Dynein is believed to control the initial lateral interaction between the kinetochore and spindle microtubules and to facilitate the subsequent formation of end-on kinetochore-microtubule attachments mediated by the NDC80 complex. May act as an adapter protein linking the dynein motor complex to various cargos. The sequence is that of Protein Spindly (spdl1) from Danio rerio (Zebrafish).